Consider the following 77-residue polypeptide: Conotoxin King-Kong 1 (77 aa).

Residues 1 to 22 (MKLTCMMIVAVLFLTAWTFATA) form the signal peptide. Residues 23–49 (DDSSNGLENLFSKAHHEMKNPEASKLN) constitute a propeptide that is removed on maturation. 3 cysteine pairs are disulfide-bonded: C52–C67, C59–C71, and C66–C76. At M61 the chain carries Methionine sulfoxide; partial.

The protein belongs to the conotoxin O1 superfamily. As to expression, expressed by the venom duct.

It localises to the secreted. This is Conotoxin King-Kong 1 from Conus textile (Cloth-of-gold cone).